The chain runs to 235 residues: Small ribosomal subunit protein uS3 (235 aa).

Residues 39-107 (VRQFLNKELA…PAQINIAEVK (69 aa)) form the KH type-2 domain. A compositionally biased stretch (low complexity) spans 215–226 (AQQPEQQPATPK). The tract at residues 215 to 235 (AQQPEQQPATPKKAPRGKGRK) is disordered.

It belongs to the universal ribosomal protein uS3 family. Part of the 30S ribosomal subunit. Forms a tight complex with proteins S10 and S14.

In terms of biological role, binds the lower part of the 30S subunit head. Binds mRNA in the 70S ribosome, positioning it for translation. The protein is Small ribosomal subunit protein uS3 of Histophilus somni (strain 129Pt) (Haemophilus somnus).